Consider the following 226-residue polypeptide: Ras-related protein RGP1 (226 aa).

25–32 (GDSAVGKS) lines the GTP pocket. Positions 47–55 (SKATIGVEF) match the Effector region motif. Residues 73–77 (DTAGQ) and 131–134 (NKSD) each bind GTP. 2 S-geranylgeranyl cysteine lipidation sites follow: C223 and C224.

It belongs to the small GTPase superfamily. Rab family.

It localises to the cell membrane. Functionally, may play an important role in plant growth and development. The polypeptide is Ras-related protein RGP1 (RGP1) (Oryza sativa subsp. japonica (Rice)).